The chain runs to 923 residues: Tyrosine-protein kinase receptor torso (923 aa).

An N-terminal signal peptide occupies residues 1 to 20 (MLIFYAKYAFIFWFFVGSNQ). Over 21 to 399 (GEMLLMDKIS…VLLSEGNMVK (379 aa)) the chain is Extracellular. N-linked (GlcNAc...) asparagine glycosylation is found at Asn37, Asn63, Asn107, Asn142, Asn146, Asn287, Asn298, Asn314, Asn326, Asn342, Asn348, and Asn377. The chain crosses the membrane as a helical span at residues 400 to 420 (LVLFIIVPICCILMLCSLTFC). Residues 421 to 923 (RRNRSEVQAL…EEELYLEPLN (503 aa)) lie on the Cytoplasmic side of the membrane. The 400-residue stretch at 475–874 (VLLQDVLGEG…TFSALKHRLG (400 aa)) folds into the Protein kinase domain. Residues 481–489 (LGEGAFGLV) and Lys502 contribute to the ATP site. At Ser608 the chain carries Phosphoserine. Residues 656-687 (YIPKTAEAPKDRPKRKLKPQPKKDSKQDFKSD) form a disordered region. The span at 676–687 (PKKDSKQDFKSD) shows a compositional bias: basic and acidic residues. The active-site Proton acceptor is the Asp741.

Belongs to the protein kinase superfamily. Tyr protein kinase family. Mg(2+) is required as a cofactor. In terms of processing, may be auto-phosphorylated on tyrosine residues.

The protein localises to the membrane. The catalysed reaction is L-tyrosyl-[protein] + ATP = O-phospho-L-tyrosyl-[protein] + ADP + H(+). In terms of biological role, probable receptor tyrosine kinase which is required for determination of anterior and posterior terminal structures in the embryo. During postembryonic development, involved in the initiation of metamorphosis probably by inducing the production of ecdysone in response to prothoracicotropic hormone Ptth. Binding to Ptth stimulates activation of canonical MAPK signaling leading to ERK phosphorylation. The chain is Tyrosine-protein kinase receptor torso (tor) from Drosophila melanogaster (Fruit fly).